We begin with the raw amino-acid sequence, 693 residues long: Phosphoribosylformylglycinamidine synthase subunit PurL (693 aa).

His-34 is an active-site residue. Positions 37 and 76 each coordinate ATP. Residue Glu-78 coordinates Mg(2+). Substrate-binding positions include 79–82 (SHNH) and Arg-101. Residue His-80 is the Proton acceptor of the active site. Asp-102 provides a ligand contact to Mg(2+). Gln-222 provides a ligand contact to substrate. Position 248 (Asp-248) interacts with Mg(2+). A substrate-binding site is contributed by 292–294 (ETQ). ATP contacts are provided by Asp-470 and Gly-507. Residue Ser-510 coordinates substrate.

This sequence belongs to the FGAMS family. In terms of assembly, monomer. Part of the FGAM synthase complex composed of 1 PurL, 1 PurQ and 2 PurS subunits.

It is found in the cytoplasm. It carries out the reaction N(2)-formyl-N(1)-(5-phospho-beta-D-ribosyl)glycinamide + L-glutamine + ATP + H2O = 2-formamido-N(1)-(5-O-phospho-beta-D-ribosyl)acetamidine + L-glutamate + ADP + phosphate + H(+). Its pathway is purine metabolism; IMP biosynthesis via de novo pathway; 5-amino-1-(5-phospho-D-ribosyl)imidazole from N(2)-formyl-N(1)-(5-phospho-D-ribosyl)glycinamide: step 1/2. Part of the phosphoribosylformylglycinamidine synthase complex involved in the purines biosynthetic pathway. Catalyzes the ATP-dependent conversion of formylglycinamide ribonucleotide (FGAR) and glutamine to yield formylglycinamidine ribonucleotide (FGAM) and glutamate. The FGAM synthase complex is composed of three subunits. PurQ produces an ammonia molecule by converting glutamine to glutamate. PurL transfers the ammonia molecule to FGAR to form FGAM in an ATP-dependent manner. PurS interacts with PurQ and PurL and is thought to assist in the transfer of the ammonia molecule from PurQ to PurL. This Pyrobaculum calidifontis (strain DSM 21063 / JCM 11548 / VA1) protein is Phosphoribosylformylglycinamidine synthase subunit PurL.